Here is a 90-residue protein sequence, read N- to C-terminus: Small ribosomal subunit protein bS16 (90 aa).

The protein belongs to the bacterial ribosomal protein bS16 family.

This is Small ribosomal subunit protein bS16 from Lysinibacillus sphaericus (strain C3-41).